The following is a 69-amino-acid chain: U2-agatoxin-Ao1w (69 aa).

The N-terminal stretch at 1-20 is a signal peptide; it reads MRAIISLLLISAMVFSMIEA. A propeptide spanning residues 21–34 is cleaved from the precursor; the sequence is VPVEEGLQLFEGER. Disulfide bonds link Cys-37–Cys-53, Cys-44–Cys-58, and Cys-52–Cys-68.

It belongs to the neurotoxin 01 (U2-agtx) family. Expressed by the venom gland.

The protein localises to the secreted. Its function is as follows. Insect active toxin causing rapid but reversible paralysis in crickets. No activity shown in mammals. Does not show effect on mammalian voltage-gated calcium channels. This chain is U2-agatoxin-Ao1w, found in Agelena orientalis (Funnel-web spider).